A 147-amino-acid polypeptide reads, in one-letter code: Catabolic 3-dehydroquinase 2 (147 aa).

The active-site Proton acceptor is the tyrosine 23. Residues asparagine 74, histidine 80, and aspartate 87 each contribute to the substrate site. Residue histidine 100 is the Proton donor of the active site. Substrate contacts are provided by residues 101–102 (IT) and arginine 111.

The protein belongs to the type-II 3-dehydroquinase family. In terms of assembly, homododecamer. Adopts a ring-like structure, composed of an arrangement of two hexameric rings stacked on top of one another.

It catalyses the reaction 3-dehydroquinate = 3-dehydroshikimate + H2O. Its pathway is aromatic compound metabolism; 3,4-dihydroxybenzoate biosynthesis; 3,4-dihydroxybenzoate from 3-dehydroquinate: step 1/2. In terms of biological role, is involved in the catabolism of quinate. Allows the utilization of quinate as carbon source via the beta-ketoadipate pathway. In Aspergillus terreus (strain NIH 2624 / FGSC A1156), this protein is Catabolic 3-dehydroquinase 2.